Reading from the N-terminus, the 113-residue chain is Propane 2-monooxygenase, effector component (113 aa).

This sequence belongs to the TmoD/XamoD family. As to quaternary structure, the propane 2-monooxygenase multicomponent enzyme system is composed of an electron transfer component and a monooxygenase component interacting with the effector protein PrmD. The electron transfer component is composed of a reductase (PrmB), and the monooxygenase component is formed by a large subunit (PrmA) and a small subunit (PrmC).

Its function is as follows. Effector component of the propane 2-monooxygenase multicomponent enzyme system which is involved in the degradation of propane via the O2-dependent hydroxylation of propane. The chain is Propane 2-monooxygenase, effector component from Rhodococcus jostii (strain RHA1).